We begin with the raw amino-acid sequence, 367 residues long: ELAV-like protein 3 (367 aa).

RRM domains are found at residues 39–117 (TNLI…YARP), 125–205 (ANLY…FANN), and 284–362 (WCIF…FKTS).

This sequence belongs to the RRM elav family. As to quaternary structure, interacts with MAP1B light chain LC1. Brain specific.

Functionally, RNA-binding protein that binds to AU-rich element (ARE) sequences of target mRNAs, including VEGF mRNA. May also bind poly-A tracts via RRM 3. May be involved in neuronal differentiation and maintenance. Plays a role in the stabilization of GAP43 mRNA and in spatial learning. The protein is ELAV-like protein 3 (ELAVL3) of Homo sapiens (Human).